The chain runs to 128 residues: Organic solute transporter subunit beta (128 aa).

Topologically, residues methionine 1 to aspartate 30 are extracellular. The chain crosses the membrane as a helical span at residues alanine 31 to leucine 53. The Cytoplasmic segment spans residues arginine 54–serine 128. 2 disordered regions span residues arginine 61–aspartate 80 and proline 101–serine 128. Basic and acidic residues-rich tracts occupy residues glutamine 66–aspartate 80 and proline 101–serine 115. Position 116 is a phosphoserine (serine 116).

Belongs to the OST-beta family. In terms of assembly, interacts with SLC51A. The Ost-alpha/Ost-beta complex is a heterodimer composed of alpha (SLC51A) and beta (SLC51B) subunit; induces the transport of SLC51A from the endoplasmic reticulum to the plasma membrane. Present at high level in ileum. In ileum, it is restricted to the apical domain on the mature villus enterocytes with little detectable expression in the goblet cells or crypt enterocytes (at protein level). Expressed in kidney but not in heart, brain, liver, spleen, embryo, lung, thymus, ovary nor testis.

Its subcellular location is the cell membrane. It carries out the reaction taurocholate(out) = taurocholate(in). The catalysed reaction is tauroursodeoxycholate(out) = tauroursodeoxycholate(in). It catalyses the reaction glycoursodeoxycholate(out) = glycoursodeoxycholate(in). The enzyme catalyses glycocholate(out) = glycocholate(in). It carries out the reaction taurochenodeoxycholate(out) = taurochenodeoxycholate(in). The catalysed reaction is glycochenodeoxycholate(out) = glycochenodeoxycholate(in). It catalyses the reaction taurodeoxycholate(out) = taurodeoxycholate(in). The enzyme catalyses glycodeoxycholate(out) = glycodeoxycholate(in). It carries out the reaction prostaglandin E2(out) = prostaglandin E2(in). The catalysed reaction is estrone 3-sulfate(out) = estrone 3-sulfate(in). It catalyses the reaction dehydroepiandrosterone 3-sulfate(out) = dehydroepiandrosterone 3-sulfate(in). Functionally, essential component of the Ost-alpha/Ost-beta complex, a heterodimer that acts as the intestinal basolateral transporter responsible for bile acid export from enterocytes into portal blood. The Ost-alpha/Ost-beta complex efficiently transports the major species of bile acids (taurocholate). Taurine conjugates are transported more efficiently across the basolateral membrane than glycine-conjugated bile acids. Can also transport steroids such as estrone 3-sulfate and dehydroepiandrosterone 3-sulfate, therefore playing a role in the enterohepatic circulation of sterols. Able to transport eicosanoids such as prostaglandin E2. Modulates SLC51A glycosylation, membrane trafficking and stability activities. This chain is Organic solute transporter subunit beta (Slc51b), found in Mus musculus (Mouse).